Here is a 163-residue protein sequence, read N- to C-terminus: MTEQATNGAADEQQPQFSLQRIYLRDLSFESPKSPEIFRQEWNPSISLDLNTRQKQLDGDFYEVVLTVSVTVKNGEDTTAFIAEVQQAGIFLIKNLDPSSMSHTLGAFCPNILFPYAREALDNLVVRGSFPALMLSPVNFDALYAQEIARMQASGEIPTPSVQ.

Belongs to the SecB family. Homotetramer, a dimer of dimers. One homotetramer interacts with 1 SecA dimer.

The protein localises to the cytoplasm. One of the proteins required for the normal export of preproteins out of the cell cytoplasm. It is a molecular chaperone that binds to a subset of precursor proteins, maintaining them in a translocation-competent state. It also specifically binds to its receptor SecA. The polypeptide is Protein-export protein SecB (Pseudomonas aeruginosa (strain LESB58)).